Consider the following 236-residue polypeptide: tRNA1(Val) (adenine(37)-N6)-methyltransferase (236 aa).

Belongs to the methyltransferase superfamily. tRNA (adenine-N(6)-)-methyltransferase family.

The protein resides in the cytoplasm. The catalysed reaction is adenosine(37) in tRNA1(Val) + S-adenosyl-L-methionine = N(6)-methyladenosine(37) in tRNA1(Val) + S-adenosyl-L-homocysteine + H(+). Functionally, specifically methylates the adenine in position 37 of tRNA(1)(Val) (anticodon cmo5UAC). The chain is tRNA1(Val) (adenine(37)-N6)-methyltransferase from Aeromonas hydrophila subsp. hydrophila (strain ATCC 7966 / DSM 30187 / BCRC 13018 / CCUG 14551 / JCM 1027 / KCTC 2358 / NCIMB 9240 / NCTC 8049).